We begin with the raw amino-acid sequence, 206 residues long: GTP cyclohydrolase 1 (206 aa).

Zn(2+)-binding residues include Cys95, His98, and Cys166.

Belongs to the GTP cyclohydrolase I family. As to quaternary structure, toroid-shaped homodecamer, composed of two pentamers of five dimers.

The enzyme catalyses GTP + H2O = 7,8-dihydroneopterin 3'-triphosphate + formate + H(+). It participates in cofactor biosynthesis; 7,8-dihydroneopterin triphosphate biosynthesis; 7,8-dihydroneopterin triphosphate from GTP: step 1/1. This is GTP cyclohydrolase 1 from Bartonella bacilliformis (strain ATCC 35685 / KC583 / Herrer 020/F12,63).